The sequence spans 388 residues: Oligogalacturonate lyase (388 aa).

The protein resides in the periplasm. It catalyses the reaction 4-(4-deoxy-alpha-D-galact-4-enuronosyl)-D-galacturonate = 2 5-dehydro-4-deoxy-D-glucuronate. It participates in glycan metabolism; pectin degradation; 2-dehydro-3-deoxy-D-gluconate from pectin: step 3/5. In terms of biological role, involved in degradation of pectin, which causes soft-rod disease in plants. This is Oligogalacturonate lyase (ogl) from Dickeya dadantii (strain 3937) (Erwinia chrysanthemi (strain 3937)).